Here is a 538-residue protein sequence, read N- to C-terminus: Solute carrier family 2, facilitated glucose transporter member 9 (538 aa).

At 1-34 (MDSRELALASLMCDTGGPGELSVGHQQRRTKKWS) the chain is on the cytoplasmic side. At Ser-3 the chain carries Phosphoserine. A helical membrane pass occupies residues 35–54 (FSLVVAALVGAFGSSFLYGY). N-linked (GlcNAc...) asparagine glycosylation is found at Asn-55 and Asn-71. Over 55–88 (NLSVVNAPTPYIKAFYNGTWYRRHGQPIDPDTLT) the chain is Extracellular. The helical transmembrane segment at 89–109 (LLWSVTVSIFAIGGLVGTLMV) threads the bilayer. Residues 110–120 (KMIGKFLGRKS) are Cytoplasmic-facing. The chain crosses the membrane as a helical span at residues 121-143 (TLLVNNGFAISAALLMACSLRAG). Over 144 to 148 (TFEML) the chain is Extracellular. The chain crosses the membrane as a helical span at residues 149-170 (IVGRFIMGVDGGIALSALPMYL). Residues 171-181 (NEISPKEIRGS) are Cytoplasmic-facing. The helical transmembrane segment at 182–200 (LGQVTAIFICIGVFSGQLL) threads the bilayer. Residues 201–211 (GLPELLGREST) lie on the Extracellular side of the membrane. Residues 212-233 (WPYLFGVIIVPALVQLASLPFL) traverse the membrane as a helical segment. Residues 234–297 (PESPRYLLFE…LLRAPFVRWQ (64 aa)) are Cytoplasmic-facing. The helical transmembrane segment at 298–319 (VITVIITMASYQLCGLNAIWFY) threads the bilayer. Over 320–333 (TNSIFGKAGIPQDK) the chain is Extracellular. Residues 334 to 356 (IPYITLSTGGIETLAAIFSGLVI) form a helical membrane-spanning segment. Over 357 to 362 (ERLGRR) the chain is Cytoplasmic. Residues 363-385 (PLLIGGFGLMALFFGTLTATLTL) traverse the membrane as a helical segment. Over 386 to 390 (QDQAP) the chain is Extracellular. The chain crosses the membrane as a helical span at residues 391 to 418 (WVPYLSIVCILAIIASFCSGPGGIPFIL). Residues 419-429 (TGEFFQQSERP) are Cytoplasmic-facing. Residues 430-453 (AAFMIAGTVNWLSNFAVGLLFPFI) form a helical membrane-spanning segment. Residues 454-458 (QKSLD) are Extracellular-facing. A helical membrane pass occupies residues 459 to 480 (SYCFLVFATICIAGATYFYFVL). At 481–538 (PETKNRTHAEISQAFAKRNKAQPPEVKADSAMTEEKANSQTEPDSSSTLDSYGQNKIV) the chain is on the cytoplasmic side. Positions 495 to 538 (FAKRNKAQPPEVKADSAMTEEKANSQTEPDSSSTLDSYGQNKIV) are disordered. Polar residues predominate over residues 518–538 (NSQTEPDSSSTLDSYGQNKIV).

The protein belongs to the major facilitator superfamily. Sugar transporter (TC 2.A.1.1) family. N-glycosylated. Highly expressed in the intestine, with high expression in the jejunum and ileum, the segments of the intestine that perform the majority of urate excretion. Isoform 1: Widely expressed. Isoform 1: In kidney, expressed at low levels in proximal tubules. Isoform 2: Primarily expressed in liver and kidney; with specific expression in distal convoluted and connecting tubules of kidney.

The protein localises to the basolateral cell membrane. It localises to the apical cell membrane. It catalyses the reaction urate(out) = urate(in). In terms of biological role, high-capacity urate transporter, which may play a role in the urate reabsorption by proximal tubules. May have a residual high-affinity, low-capacity glucose and fructose transporter activity. Transports urate at rates 45- to 60-fold faster than glucose. Does not transport galactose. May mediate small uptake of adenine but not of other nucleobases. The sequence is that of Solute carrier family 2, facilitated glucose transporter member 9 from Mus musculus (Mouse).